Reading from the N-terminus, the 334-residue chain is NmrA-like family domain-containing oxidoreductase lnaB (334 aa).

Residues 12 to 17, 38 to 42, 59 to 60, 80 to 82, K138, and 162 to 165 contribute to the NADP(+) site; these read GGTGKQ, RNAQS, DG, INS, and FLEN.

Belongs to the NmrA-type oxidoreductase family.

The protein operates within secondary metabolite biosynthesis. Its function is as follows. NmrA-like family domain-containing oxidoreductase; part of the lna gene cluster that mediates the biosynthesis of diastereomeric piperazines. Lna and lnb clusters encode sets of enzymes that produce overlapping sets of previously undescribed metabolites such as piperazinomycin-like metabolites or morpholine. The lna and lnb biosynthetic pathways appear to be part of a signaling network that controls the formation of sclerotia, a resilient overwintering structure. One primary function of the non-canonical nonribosomal peptide synthetases lnaA and lnbA consists in the reduction of L-tyrosine. The presence in the clusters of tailoring enzymes such as the oxidoreductases lnaB, lnbB, lnaE or lnbE, as well as of the cytochrome P450 monooxygenases lnaC, lnaD, or lnbC, might explain formation of various diastereomeric piperazines. The protein is NmrA-like family domain-containing oxidoreductase lnaB of Aspergillus flavus (strain ATCC 200026 / FGSC A1120 / IAM 13836 / NRRL 3357 / JCM 12722 / SRRC 167).